The following is an 813-amino-acid chain: G-type lectin S-receptor-like serine/threonine-protein kinase LECRK1 (813 aa).

The signal sequence occupies residues 1–19 (MVALLLFPMLLQLLSPTCA). The Extracellular segment spans residues 20–466 (QTQKNITLGS…NRKHWVLGSS (447 aa)). The Bulb-type lectin domain maps to 22-149 (QKNITLGSTL…DGTTKWQTFD (128 aa)). Residues Asn24, Asn57, Asn164, Asn168, Asn219, and Asn242 are each glycosylated (N-linked (GlcNAc...) asparagine). One can recognise an EGF-like; atypical domain in the interval 293-346 (PQNICHAIVSDVGSGVCGFNSYCTFDGTRNQIASCQCPPWYKFFDEQKKYKGCK). 5 disulfide bridges follow: Cys297-Cys315, Cys309-Cys327, Cys329-Cys345, Cys391-Cys413, and Cys395-Cys401. Residues 354–433 (CDLDEATALA…NMADYVQRTV (80 aa)) enclose the PAN domain. N-linked (GlcNAc...) asparagine glycosylation is found at Asn407 and Asn441. Residues 467-487 (LILGTSILVNFALISIFLFGT) form a helical membrane-spanning segment. Residues 488–813 (YCRIATKKNI…DPCSFISSLP (326 aa)) are Cytoplasmic-facing. In terms of domain architecture, Protein kinase spans 523 to 797 (AGFHEILGAG…KVTQMLDGAV (275 aa)). ATP-binding positions include 529 to 537 (LGAGASGVV) and Lys553. Asp647 functions as the Proton acceptor in the catalytic mechanism.

It belongs to the protein kinase superfamily. Ser/Thr protein kinase family.

The protein resides in the membrane. The enzyme catalyses L-seryl-[protein] + ATP = O-phospho-L-seryl-[protein] + ADP + H(+). It carries out the reaction L-threonyl-[protein] + ATP = O-phospho-L-threonyl-[protein] + ADP + H(+). Involved in innate immunity. Required for the expression of defense-related genes PR1A, LOX2 and CHS1 upon biotic stresses. Required for basal resistance to the fungal blast (M.grisea), bacterial blight (X.oryzae pv. oryzae, Xoo) and the herbivorous insect brown planthopper (N.lugens, BPH). May be involved in several defense signaling pathways. Involved in the promotion of seed germination. Required for the expression of alpha-amylase genes during seed germination. Involved in resistance against the herbivorous insect brown planthopper (N.lugens, BPH). Member of the BPH3 (BPH resistance locus 3) cluster which contains LECRK1, LECRK2 and LECRK3. In Oryza sativa subsp. japonica (Rice), this protein is G-type lectin S-receptor-like serine/threonine-protein kinase LECRK1.